Consider the following 283-residue polypeptide: Endochitinase At2g43620 (283 aa).

Residues 1-28 (MATLRAMLKNAFILFLFTLTIMAKTVFS) form the signal peptide. In terms of domain architecture, Chitin-binding type-1 spans 29-66 (QQCGTTGCAANLCCSRYGYCGTTDAYCGTGCRSGPCSS). 4 disulfides stabilise this stretch: C31–C42, C36–C48, C41–C55, and C59–C64. The catalytic stretch occupies residues 88-283 (DTIENVVTPA…GITPGANLSC (196 aa)). Residue E150 is the Proton donor of the active site. N-linked (GlcNAc...) asparagine glycosylation is present at N280.

Belongs to the glycosyl hydrolase 19 family. Chitinase class I subfamily.

It carries out the reaction Random endo-hydrolysis of N-acetyl-beta-D-glucosaminide (1-&gt;4)-beta-linkages in chitin and chitodextrins.. This is Endochitinase At2g43620 from Arabidopsis thaliana (Mouse-ear cress).